Here is a 116-residue protein sequence, read N- to C-terminus: NADPH-dependent 7-cyano-7-deazaguanine reductase (116 aa).

The active-site Thioimide intermediate is the cysteine 31. Aspartate 38 functions as the Proton donor in the catalytic mechanism. Residues 53–55 (VEL) and 72–73 (YE) contribute to the substrate site.

It belongs to the GTP cyclohydrolase I family. QueF type 1 subfamily.

Its subcellular location is the cytoplasm. It carries out the reaction 7-aminomethyl-7-carbaguanine + 2 NADP(+) = 7-cyano-7-deazaguanine + 2 NADPH + 3 H(+). Its pathway is tRNA modification; tRNA-queuosine biosynthesis. In terms of biological role, catalyzes the NADPH-dependent reduction of 7-cyano-7-deazaguanine (preQ0) to 7-aminomethyl-7-deazaguanine (preQ1). The sequence is that of NADPH-dependent 7-cyano-7-deazaguanine reductase from Chloroherpeton thalassium (strain ATCC 35110 / GB-78).